The sequence spans 432 residues: D-amino acid dehydrogenase (432 aa).

3-17 (VVILGSGVVGVASAW) lines the FAD pocket.

The protein belongs to the DadA oxidoreductase family. FAD is required as a cofactor.

It carries out the reaction a D-alpha-amino acid + A + H2O = a 2-oxocarboxylate + AH2 + NH4(+). Its pathway is amino-acid degradation; D-alanine degradation; NH(3) and pyruvate from D-alanine: step 1/1. Functionally, oxidative deamination of D-amino acids. The chain is D-amino acid dehydrogenase from Shigella sonnei (strain Ss046).